The chain runs to 108 residues: MVRVKNVKMYKKRSLQLIRLAIELAKNNNIELARMYIKLALLYSRKLKFKIPIEYKRLFCRKCFTPLIIGITERRRIKNKVLVRTCLYCGWTRRYKLQYKTTNKKSKS.

Cys60, Cys63, Cys86, and Cys89 together coordinate Zn(2+).

It belongs to the eukaryotic/archaeal RNase P protein component 4 family. As to quaternary structure, consists of a catalytic RNA component and at least 4-5 protein subunits. Zn(2+) is required as a cofactor.

The protein localises to the cytoplasm. The enzyme catalyses Endonucleolytic cleavage of RNA, removing 5'-extranucleotides from tRNA precursor.. Functionally, part of ribonuclease P, a protein complex that generates mature tRNA molecules by cleaving their 5'-ends. In Sulfurisphaera tokodaii (strain DSM 16993 / JCM 10545 / NBRC 100140 / 7) (Sulfolobus tokodaii), this protein is Ribonuclease P protein component 4.